Here is a 276-residue protein sequence, read N- to C-terminus: Rhomboid protease GlpG (276 aa).

Transmembrane regions (helical) follow at residues 94–114 (GPVT…MSLI), 142–162 (IFMH…WYLG), 169–189 (LGSG…GYVQ), 192–212 (FSGP…GYVW), 229–249 (LIIF…GMSM), and 250–270 (ANGA…VDTL). Ser201 functions as the Nucleophile in the catalytic mechanism. His254 is a catalytic residue.

It belongs to the peptidase S54 family.

The protein localises to the cell inner membrane. It carries out the reaction Cleaves type-1 transmembrane domains using a catalytic dyad composed of serine and histidine that are contributed by different transmembrane domains.. Functionally, rhomboid-type serine protease that catalyzes intramembrane proteolysis. This is Rhomboid protease GlpG from Salmonella agona (strain SL483).